Consider the following 58-residue polypeptide: Mesomartoxin (58 aa).

A signal peptide spans 1–29 (MMSRLSVFILIALVLSVIIDVLNNSKVEG). Intrachain disulfides connect C31–C49, C35–C54, and C39–C56.

This sequence belongs to the short scorpion toxin superfamily. Potassium channel inhibitor family. Alpha-KTx 26 subfamily. Expressed by the venom gland.

It localises to the secreted. Recombinant toxin that reversibly blocks the voltage-gated potassium channels Shaker (IC(50)=0.054 nM), rKv1.2/KCNA2 (IC(50)=15.6 nM), and rKv1.3/KCNA3 (IC(50)=12.5 uM). The protein is Mesomartoxin of Olivierus martensii (Manchurian scorpion).